The sequence spans 297 residues: tRNA dimethylallyltransferase (297 aa).

An ATP-binding site is contributed by 15–22 (GPTASGKS). Position 17–22 (17–22 (TASGKS)) interacts with substrate. Interaction with substrate tRNA stretches follow at residues 40-43 (DSMQ) and 164-168 (QRIVR).

This sequence belongs to the IPP transferase family. In terms of assembly, monomer. The cofactor is Mg(2+).

It catalyses the reaction adenosine(37) in tRNA + dimethylallyl diphosphate = N(6)-dimethylallyladenosine(37) in tRNA + diphosphate. In terms of biological role, catalyzes the transfer of a dimethylallyl group onto the adenine at position 37 in tRNAs that read codons beginning with uridine, leading to the formation of N6-(dimethylallyl)adenosine (i(6)A). This Rhizobium johnstonii (strain DSM 114642 / LMG 32736 / 3841) (Rhizobium leguminosarum bv. viciae) protein is tRNA dimethylallyltransferase.